The primary structure comprises 312 residues: R2-like ligand binding oxidase (312 aa).

E68, E101, and H104 together coordinate Mn(2+). Positions 71 to 162 (VTQDIQPFMA…AAQVRASATY (92 aa)) form a cross-link, 3-(O4'-tyrosyl)-valine (Val-Tyr). Residue E101 participates in Fe cation binding. 3 residues coordinate Fe cation: E167, E202, and H205.

It belongs to the ribonucleoside diphosphate reductase small chain family. R2-like ligand binding oxidase subfamily. Homodimer. The cofactor is Fe cation. Requires Mn(2+) as cofactor.

In terms of biological role, probable oxidase that might be involved in lipid metabolism. This chain is R2-like ligand binding oxidase, found in Mycobacterium sp. (strain JLS).